Reading from the N-terminus, the 336-residue chain is MAFNMHNRNLLSLMHHSTRELRYLLDLSRDLKRAKYTGTEQQHLKRKNIALIFEKTSTRTRCAFEVAAYDQGANVTYIDPNSSQIGHKESMKDTARVLGRMYDAIEYRGFKQEIVEELAKFAGVPVFNGLTDEYHPTQMLADVLTMREHSDKPLHDISYAYLGDARNNMGNSLLLIGAKLGMDVRIAAPKALWPHDEFVAQCKKFAEESGAKLTLTEDPKEAVKGVDFVHTDVWVSMGEPVEAWGERIKELLPYQVNMEIMKATGNPRAKFMHCLPAFHNSETKVGKQIAEQYPNLANGIEVTEDVFESPYNIAFEQAENRMHTIKAILVSTLADI.

Carbamoyl phosphate-binding positions include 57 to 60 (STRT), Gln84, Arg108, and 135 to 138 (HPTQ). L-ornithine-binding positions include Asn168, Asp232, and 236–237 (SM). Residues 274-275 (CL) and Arg321 contribute to the carbamoyl phosphate site.

Belongs to the aspartate/ornithine carbamoyltransferase superfamily. OTCase family. Nonameric or dodecamer (tetramer of trimers).

Its subcellular location is the cytoplasm. It catalyses the reaction carbamoyl phosphate + L-ornithine = L-citrulline + phosphate + H(+). The protein operates within amino-acid degradation; L-arginine degradation via ADI pathway; carbamoyl phosphate from L-arginine: step 2/2. Its activity is regulated as follows. Inhibited by 2-aminopentanoic acid (norvaline). Activated by phosphate and nucleoside monophosphates such as AMP, GMP, CMP, UMP. Allosterically inhibited by the polyamines such as spermidine and putrescine. Its function is as follows. Involved in the catabolism of arginine. Catalyzes the phosphorolysis of citrulline, the reverse reaction of the biosynthetic one, yielding ornithine and carbamoyl phosphate which serve to generate ATP from ADP. This catabolic OTCase does not carry out the biosynthetic reaction because of a poor affinity and a marked cooperativity for carbamoyl phosphate. The protein is Ornithine carbamoyltransferase, catabolic of Pseudomonas aeruginosa (strain ATCC 15692 / DSM 22644 / CIP 104116 / JCM 14847 / LMG 12228 / 1C / PRS 101 / PAO1).